A 314-amino-acid chain; its full sequence is ADP-L-glycero-D-manno-heptose-6-epimerase (314 aa).

NADP(+) is bound by residues 10 to 11 (MI), 31 to 32 (DH), lysine 38, arginine 53, 75 to 79 (EGACS), and asparagine 92. The active-site Proton acceptor is the tyrosine 139. Lysine 143 contacts NADP(+). Asparagine 174 is a substrate binding site. NADP(+) contacts are provided by valine 175 and lysine 183. Catalysis depends on lysine 183, which acts as the Proton acceptor. Substrate-binding positions include serine 185, histidine 192, 206–209 (FAGS), arginine 214, and tyrosine 277.

It belongs to the NAD(P)-dependent epimerase/dehydratase family. HldD subfamily. In terms of assembly, homopentamer. NADP(+) serves as cofactor.

It carries out the reaction ADP-D-glycero-beta-D-manno-heptose = ADP-L-glycero-beta-D-manno-heptose. The protein operates within nucleotide-sugar biosynthesis; ADP-L-glycero-beta-D-manno-heptose biosynthesis; ADP-L-glycero-beta-D-manno-heptose from D-glycero-beta-D-manno-heptose 7-phosphate: step 4/4. Its function is as follows. Catalyzes the interconversion between ADP-D-glycero-beta-D-manno-heptose and ADP-L-glycero-beta-D-manno-heptose via an epimerization at carbon 6 of the heptose. The protein is ADP-L-glycero-D-manno-heptose-6-epimerase of Vibrio cholerae serotype O1 (strain ATCC 39541 / Classical Ogawa 395 / O395).